Consider the following 197-residue polypeptide: Protein jagunal (197 aa).

The Cytoplasmic segment spans residues 1–39; that stretch reads MATRGGPMVAGTDGNDFEFRQRVAGTYQISLLNKSRLKY. A helical membrane pass occupies residues 40–60; the sequence is CIFFHALLFFVMLAKLTSDIL. The Lumenal portion of the chain corresponds to 61–78; the sequence is DRLDIFVLEIEELEVPSP. Residues 79–99 traverse the membrane as a helical segment; the sequence is LWWEYVWAGSLLTSFLGLSAA. The Cytoplasmic segment spans residues 100 to 109; the sequence is RGNKVREMQK. Residues 110–130 form a helical membrane-spanning segment; sequence YMIAILVFAILPLLYCFAYYF. Residues 131–159 lie on the Lumenal side of the membrane; the sequence is SDVWEFATMDKSVELDETDIFIWRGYPYG. The helical transmembrane segment at 160–180 threads the bilayer; that stretch reads VFWYAFCFVGFQVHGFTLYFA. The Cytoplasmic segment spans residues 181 to 197; the sequence is YNLVKVWKARTATRKFQ.

The protein belongs to the jagunal family.

It localises to the endoplasmic reticulum membrane. Required for endoplasmic reticulum organization and proper vesicular traffic during vitellogenesis. Required for oocyte and bristle growth. This chain is Protein jagunal, found in Drosophila pseudoobscura pseudoobscura (Fruit fly).